Here is a 241-residue protein sequence, read N- to C-terminus: DNA repair protein RecO (241 aa).

The protein belongs to the RecO family.

Involved in DNA repair and RecF pathway recombination. The chain is DNA repair protein RecO from Azobacteroides pseudotrichonymphae genomovar. CFP2.